A 267-amino-acid chain; its full sequence is MTKSVEGYLKEQELAAETDSEKDDDKISIRLTNFVGPNAHSFSFDPLVRYWNRKQNNLPIYIGRYTERYNGGDVSAIVFRSKVVSRRHAQIFYENNTWYIQDMGSSSGTFLNHVRLSPPSKTSKPYPISNNDILQLGADYRGGHEVNYRCVRARVELNNSWKIKLSPYNLNEFKRMQELVLCGSSESGPPECCICLMPVLPCQALFVAPCSHSYHYKCIRPTLNESHPYFSCFICRKYHDLEAPVEEGDESLNDLLRNATVKDDASE.

The FHA domain maps to Ile60–Leu116. The RING-type zinc finger occupies Cys192 to Arg236.

This sequence belongs to the DMA1 family. In terms of assembly, interacts with sid4.

Its subcellular location is the cytoplasm. The protein localises to the cytoskeleton. The protein resides in the microtubule organizing center. It localises to the spindle pole body. It catalyses the reaction S-ubiquitinyl-[E2 ubiquitin-conjugating enzyme]-L-cysteine + [acceptor protein]-L-lysine = [E2 ubiquitin-conjugating enzyme]-L-cysteine + N(6)-ubiquitinyl-[acceptor protein]-L-lysine.. Probable E3 ubiquitin-protein ligase which is a component of the spindle assembly checkpoint, required to prevent septum formation and premature exit from mitosis if spindle function is compromised. Inhibits the septation initiation netwok (SIN) during spindle checkpoint activation. The effect appears to be mediated through preventing the SIN activator, plo1 kinase, from localizing to the SPB. The sequence is that of Probable E3 ubiquitin-protein ligase dma1 (dma1) from Schizosaccharomyces pombe (strain 972 / ATCC 24843) (Fission yeast).